A 347-amino-acid polypeptide reads, in one-letter code: Bombesin receptor-activated protein C6orf89 homolog (347 aa).

At 1–58 (MDLAANEISIYDKLSETVDLVRQTGHQCGMSEKAIEKFIRQLLEKNEPQRPPPQYPLL) the chain is on the cytoplasmic side. Residues 59–79 (IVVYKVLATLGLILLTAYFVI) form a helical membrane-spanning segment. The Extracellular segment spans residues 80 to 347 (QPFSPLAPEP…ICDGTAFSEL (268 aa)).

As to quaternary structure, homodimer. Interacts with BRS3. Interacts (via N-terminus) with SIN3B. In terms of processing, glycosylated.

It localises to the golgi apparatus membrane. The protein resides in the cytoplasm. Its function is as follows. Exhibits histone deacetylase (HDAC) enhancer properties. May play a role in cell cycle progression and wound repair of bronchial epithelial cells. This chain is Bombesin receptor-activated protein C6orf89 homolog, found in Pongo abelii (Sumatran orangutan).